The chain runs to 103 residues: Large ribosomal subunit protein uL23 (103 aa).

It belongs to the universal ribosomal protein uL23 family. Part of the 50S ribosomal subunit. Contacts protein L29, and trigger factor when it is bound to the ribosome.

In terms of biological role, one of the early assembly proteins it binds 23S rRNA. One of the proteins that surrounds the polypeptide exit tunnel on the outside of the ribosome. Forms the main docking site for trigger factor binding to the ribosome. The chain is Large ribosomal subunit protein uL23 from Zymomonas mobilis subsp. mobilis (strain ATCC 31821 / ZM4 / CP4).